Reading from the N-terminus, the 601-residue chain is Elongation factor 4 (601 aa).

Residues 7–189 (SLIRNFSIIA…ALVTRLPPPV (183 aa)) form the tr-type G domain. Residues 19-24 (DHGKST) and 136-139 (NKVD) contribute to the GTP site.

Belongs to the TRAFAC class translation factor GTPase superfamily. Classic translation factor GTPase family. LepA subfamily.

It is found in the cell inner membrane. The enzyme catalyses GTP + H2O = GDP + phosphate + H(+). Its function is as follows. Required for accurate and efficient protein synthesis under certain stress conditions. May act as a fidelity factor of the translation reaction, by catalyzing a one-codon backward translocation of tRNAs on improperly translocated ribosomes. Back-translocation proceeds from a post-translocation (POST) complex to a pre-translocation (PRE) complex, thus giving elongation factor G a second chance to translocate the tRNAs correctly. Binds to ribosomes in a GTP-dependent manner. The chain is Elongation factor 4 from Gluconacetobacter diazotrophicus (strain ATCC 49037 / DSM 5601 / CCUG 37298 / CIP 103539 / LMG 7603 / PAl5).